The following is an 87-amino-acid chain: Kappa-4-bungarotoxin (87 aa).

A signal peptide spans 1–21; that stretch reads MKTLLLTLVVVTIVCLDLGYT. 5 cysteine pairs are disulfide-bonded: cysteine 24-cysteine 42, cysteine 35-cysteine 63, cysteine 48-cysteine 52, cysteine 67-cysteine 79, and cysteine 80-cysteine 85.

Belongs to the three-finger toxin family. Long-chain subfamily. Kappa-neurotoxin sub-subfamily. As to quaternary structure, homo- and heterodimer; non-covalently linked. As to expression, expressed by the venom gland.

It is found in the secreted. In terms of biological role, postsynaptic neurotoxin that binds and inhibits neuronal nicotinic acetylcholine receptors (nAChR) with high affinity (IC(50)&lt;100 nM). Is a selective, and slowly reversible antagonist of alpha-3/CHRNA3-containing and some alpha-4/CHRNA4-containing AChRs. The sequence is that of Kappa-4-bungarotoxin from Bungarus multicinctus (Many-banded krait).